Consider the following 294-residue polypeptide: Phosphonoacetaldehyde hydrolase (294 aa).

The active-site Nucleophile is the aspartate 19. Mg(2+)-binding residues include aspartate 19 and alanine 21. Residue lysine 60 is the Schiff-base intermediate with substrate of the active site. Aspartate 193 is a binding site for Mg(2+).

This sequence belongs to the HAD-like hydrolase superfamily. PhnX family. In terms of assembly, homodimer. Mg(2+) serves as cofactor.

The catalysed reaction is phosphonoacetaldehyde + H2O = acetaldehyde + phosphate + H(+). Its function is as follows. Involved in phosphonate degradation. The protein is Phosphonoacetaldehyde hydrolase of Hahella chejuensis (strain KCTC 2396).